The sequence spans 245 residues: Nicotinamide/nicotinic acid mononucleotide adenylyltransferase 3 (245 aa).

Positions 14 and 15 each coordinate NAD(+). H22 and K56 together coordinate ATP. W90, T93, G134, and D136 together coordinate NAD(+). K139 contributes to the ATP binding site. NAD(+)-binding residues include L146, W147, R166, and N197. 202–205 (TYVR) provides a ligand contact to ATP.

This sequence belongs to the eukaryotic NMN adenylyltransferase family. As to quaternary structure, homotetramer. Requires Mg(2+) as cofactor.

It is found in the mitochondrion. It catalyses the reaction beta-nicotinamide D-ribonucleotide + ATP + H(+) = diphosphate + NAD(+). The catalysed reaction is nicotinate beta-D-ribonucleotide + ATP + H(+) = deamido-NAD(+) + diphosphate. The protein operates within cofactor biosynthesis; NAD(+) biosynthesis; NAD(+) from nicotinamide D-ribonucleotide: step 1/1. It participates in cofactor biosynthesis; NAD(+) biosynthesis; deamido-NAD(+) from nicotinate D-ribonucleotide: step 1/1. With respect to regulation, activity is strongly inhibited by galotannin. Inhibited by P1-(adenosine-5')-P4-(nicotinic-acid-riboside-5')-tetraphosphate (Nap4AD). Functionally, catalyzes the formation of NAD(+) from nicotinamide mononucleotide (NMN) and ATP. Can also use the deamidated form; nicotinic acid mononucleotide (NaMN) as substrate with the same efficiency. Can use triazofurin monophosphate (TrMP) as substrate. Can also use GTP and ITP as nucleotide donors. Also catalyzes the reverse reaction, i.e. the pyrophosphorolytic cleavage of NAD(+). For the pyrophosphorolytic activity, can use NAD(+), NADH, NaAD, nicotinic acid adenine dinucleotide phosphate (NHD), nicotinamide guanine dinucleotide (NGD) as substrates. Fails to cleave phosphorylated dinucleotides NADP(+), NADPH and NaADP(+). Protects against axonal degeneration following injury. May be involved in the maintenance of axonal integrity. Also functions as a stress-response chaperone protein that prevents toxic aggregation of proteins; this function may be independent of its NAD(+) synthesis activity. This Mus musculus (Mouse) protein is Nicotinamide/nicotinic acid mononucleotide adenylyltransferase 3.